We begin with the raw amino-acid sequence, 296 residues long: Fructose-bisphosphate aldolase class 1 (296 aa).

The active-site Proton acceptor is the glutamate 175. The Schiff-base intermediate with dihydroxyacetone-P role is filled by lysine 212.

Belongs to the class I fructose-bisphosphate aldolase family.

It carries out the reaction beta-D-fructose 1,6-bisphosphate = D-glyceraldehyde 3-phosphate + dihydroxyacetone phosphate. Its pathway is carbohydrate degradation; glycolysis; D-glyceraldehyde 3-phosphate and glycerone phosphate from D-glucose: step 4/4. This Staphylococcus aureus (strain bovine RF122 / ET3-1) protein is Fructose-bisphosphate aldolase class 1.